Here is a 405-residue protein sequence, read N- to C-terminus: MFPRISQAAILAHSLLAVCTSAATLAEKVRGVNLGGWLVLEPWITPSLFDEAGDEAVDEYTLTEVLGVEEAAARLSEHWNTFITEEDFALIAEAGLNYVRIPIGYWAAAPLDGEPYVSGQLEHLDNAVAWARAHNLKVIVDLHGAPGSQNGFDNSGRRGPIGWQQGDTVEQTILAFETLAQRYLADDDTVTMIEALNEPHVPGGINQDQLKDYYEETLARVRKNSPEATLLLHDGFVQTEGWNGFMTGENVMMDTHHYEVFEGGQNAWSIEKHIDAACQLGRQHLQAADKPVIVGEWTGALSDCTRYLNGKGIGIRYDGTLGSNTAVGACGSKSEGSVAGLSADEIANTRRFIEAQLDAFELRNGWVFWTWKTEGAPGWDMQDLLANGVFPQPLTDREFPNQCNF.

Positions 1–26 (MFPRISQAAILAHSLLAVCTSAATLA) are cleaved as a signal peptide. The active-site Proton donor is the Glu-198. 2 disulfide bridges follow: Cys-278/Cys-403 and Cys-304/Cys-330. Glu-296 acts as the Nucleophile in catalysis.

It belongs to the glycosyl hydrolase 5 (cellulase A) family. Monomer. Mn(2+) is required as a cofactor.

Its subcellular location is the secreted. It carries out the reaction Successive hydrolysis of beta-D-glucose units from the non-reducing ends of (1-&gt;3)-beta-D-glucans, releasing alpha-glucose.. Functionally, beta-glucanases participate in the metabolism of beta-glucan, the main structural component of the cell wall. It could also function biosynthetically as a transglycosylase. The sequence is that of Probable glucan 1,3-beta-glucosidase A (exgA) from Emericella nidulans (strain FGSC A4 / ATCC 38163 / CBS 112.46 / NRRL 194 / M139) (Aspergillus nidulans).